The primary structure comprises 898 residues: Translation initiation factor IF-2 (898 aa).

2 disordered regions span residues 51–70 (RKSH…LKRK) and 114–303 (LAAE…KQHG). Composition is skewed to basic and acidic residues over residues 114-171 (LAAE…EKSK) and 184-258 (PAKE…DDKG). Residues 398-567 (HRAPVVTIMG…LLQSELLELQ (170 aa)) enclose the tr-type G domain. The segment at 407 to 414 (GHVDHGKT) is G1. 407–414 (GHVDHGKT) contacts GTP. Residues 432–436 (GITQH) are G2. Residues 453–456 (DTPG) are G3. GTP contacts are provided by residues 453–457 (DTPGH) and 507–510 (NKID). The tract at residues 507-510 (NKID) is G4. Residues 543–545 (SAH) are G5.

This sequence belongs to the TRAFAC class translation factor GTPase superfamily. Classic translation factor GTPase family. IF-2 subfamily.

It is found in the cytoplasm. Its function is as follows. One of the essential components for the initiation of protein synthesis. Protects formylmethionyl-tRNA from spontaneous hydrolysis and promotes its binding to the 30S ribosomal subunits. Also involved in the hydrolysis of GTP during the formation of the 70S ribosomal complex. The polypeptide is Translation initiation factor IF-2 (Alcanivorax borkumensis (strain ATCC 700651 / DSM 11573 / NCIMB 13689 / SK2)).